Consider the following 264-residue polypeptide: 3-methyl-2-oxobutanoate hydroxymethyltransferase (264 aa).

Mg(2+) contacts are provided by Asp45 and Asp84. 3-methyl-2-oxobutanoate contacts are provided by residues 45 to 46 (DS), Asp84, and Lys112. Glu114 is a Mg(2+) binding site. Glu181 functions as the Proton acceptor in the catalytic mechanism.

This sequence belongs to the PanB family. As to quaternary structure, homodecamer; pentamer of dimers. The cofactor is Mg(2+).

Its subcellular location is the cytoplasm. It catalyses the reaction 3-methyl-2-oxobutanoate + (6R)-5,10-methylene-5,6,7,8-tetrahydrofolate + H2O = 2-dehydropantoate + (6S)-5,6,7,8-tetrahydrofolate. The protein operates within cofactor biosynthesis; (R)-pantothenate biosynthesis; (R)-pantoate from 3-methyl-2-oxobutanoate: step 1/2. Functionally, catalyzes the reversible reaction in which hydroxymethyl group from 5,10-methylenetetrahydrofolate is transferred onto alpha-ketoisovalerate to form ketopantoate. The protein is 3-methyl-2-oxobutanoate hydroxymethyltransferase of Photobacterium profundum (strain SS9).